A 179-amino-acid polypeptide reads, in one-letter code: Signal peptidase complex catalytic subunit SEC11A (179 aa).

The Cytoplasmic portion of the chain corresponds to 1–16; it reads MLSLDFLDDVRRMNKR. Residues 17–36 form a helical; Signal-anchor for type II membrane protein membrane-spanning segment; the sequence is QLYYQVLNFGMIVSSALMIW. Residues 37–179 lie on the Lumenal side of the membrane; the sequence is KGLMLITGSE…LGLFVLVHRE (143 aa). Residues Ser-56, His-96, and Asp-122 each act as charge relay system in the active site. Positions 165-176 are C-terminal short (CTS) helix; it reads AVLFLLGLFVLV.

This sequence belongs to the peptidase S26B family. As to quaternary structure, component of the signal peptidase complex paralog A (SPC-A) composed of a catalytic subunit SEC11A and three accessory subunits SPCS1, SPCS2 and SPCS3. Within the complex, interacts with SPCS2 and SPCS3. The complex induces a local thinning of the ER membrane which is used to measure the length of the signal peptide (SP) h-region of protein substrates. This ensures the selectivity of the complex towards h-regions shorter than 18-20 amino acids.

It localises to the endoplasmic reticulum membrane. The catalysed reaction is Cleavage of hydrophobic, N-terminal signal or leader sequences from secreted and periplasmic proteins.. Catalytic component of the signal peptidase complex (SPC) which catalyzes the cleavage of N-terminal signal sequences from nascent proteins as they are translocated into the lumen of the endoplasmic reticulum. Specifically cleaves N-terminal signal peptides that contain a hydrophobic alpha-helix (h-region) shorter than 18-20 amino acids. The sequence is that of Signal peptidase complex catalytic subunit SEC11A (Sec11a) from Rattus norvegicus (Rat).